The following is a 241-amino-acid chain: Uracil-DNA glycosylase (241 aa).

The active-site Proton acceptor is the D71.

Belongs to the uracil-DNA glycosylase (UDG) superfamily. UNG family.

Its subcellular location is the cytoplasm. The enzyme catalyses Hydrolyzes single-stranded DNA or mismatched double-stranded DNA and polynucleotides, releasing free uracil.. Functionally, excises uracil residues from the DNA which can arise as a result of misincorporation of dUMP residues by DNA polymerase or due to deamination of cytosine. The sequence is that of Uracil-DNA glycosylase from Xanthomonas campestris pv. campestris (strain 8004).